Reading from the N-terminus, the 227-residue chain is MKNILKVFNTTILALIIIIATFSNSANAADSGTLNYEVYKYNTNDTSIANDYFNKPAKYIKKNGKLYVQITVNHSHWITGMSIEGHKENIISKNTAKDERTSEFEVSKLNGKIDGKIDVYIDEKVNGKPFKYDHHYNITYKFNGPTDVAGANAPGKDDKNSASGSDKGSDGTTTGQSESNSSNKDKVENPQTNAGTPAYIYAIPVASLALLIAITLFVRKKSKGNVE.

Residues 1-28 form the signal peptide; that stretch reads MKNILKVFNTTILALIIIIATFSNSANA. An NEAT domain is found at 29–150; sequence ADSGTLNYEV…KFNGPTDVAG (122 aa). Ser47, Ile48, Tyr132, and Tyr136 together coordinate heme. Residues 149 to 191 form a disordered region; it reads AGANAPGKDDKNSASGSDKGSDGTTTGQSESNSSNKDKVENPQ. The span at 161–175 shows a compositional bias: low complexity; it reads SASGSDKGSDGTTTG. Residues 189 to 193 carry the NPQTN sorting signal motif; sequence NPQTN. Position 192 is a pentaglycyl murein peptidoglycan amidated threonine (Thr192). Residues 193-227 constitute a propeptide, removed by sortase B; it reads NAGTPAYIYAIPVASLALLIAITLFVRKKSKGNVE.

This sequence belongs to the IsdC family. As to quaternary structure, monomer. Interacts with IsdA.

Its subcellular location is the secreted. The protein resides in the cell wall. Its function is as follows. Involved in heme (porphyrin) scavenging. Binds hemoglobin and almost exclusively free-base protoporphyrin IX. Probably has a role as the central conduit of the isd heme uptake system, i.e. mediates the transfer of the iron-containing nutrient from IsdABH to the membrane translocation system IsdDEF. Hemin-free IsdC (apo-IsdC) acquires hemin from hemin-containing IsdA (holo-IsdA) probably through the activated holo-IsdA-apo-IsdC complex and due to the higher affinity of apo-IsdC for the cofactor. The reaction is reversible. In Staphylococcus aureus (strain Mu3 / ATCC 700698), this protein is Iron-regulated surface determinant protein C (isdC).